A 202-amino-acid chain; its full sequence is MTQLDSRTEATTTRAFDQPRAEAAVRELLLAIGEDPDRGGLRDTPARVARAYREIFAGLYTDPDAVLNTMFDEDHDELVLIKEIPLYSTCEHHLVSFHGVAHVGYIPGRDGRVTGLSKIARLVDLYAKRPQVQERLTSQIADALVKRLGPRGVLVVVEAEHLCMAMRGVRKPGAVTTTSAVRGQFKTDAASRAEALDLILRK.

The Zn(2+) site is built by cysteine 90, histidine 93, and cysteine 163.

Belongs to the GTP cyclohydrolase I family. As to quaternary structure, homomer.

The catalysed reaction is GTP + H2O = 7,8-dihydroneopterin 3'-triphosphate + formate + H(+). Its pathway is cofactor biosynthesis; 7,8-dihydroneopterin triphosphate biosynthesis; 7,8-dihydroneopterin triphosphate from GTP: step 1/1. In Mycobacterium ulcerans (strain Agy99), this protein is GTP cyclohydrolase 1.